The chain runs to 394 residues: Elongation factor Tu (394 aa).

The region spanning 10-204 (KPHVNVGTIG…HLDSYIPEPE (195 aa)) is the tr-type G domain. Positions 19 to 26 (GHVDHGKT) are G1. 19–26 (GHVDHGKT) serves as a coordination point for GTP. Position 26 (Thr-26) interacts with Mg(2+). Residues 60–64 (GITIN) form a G2 region. Residues 81–84 (DCPG) are G3. GTP contacts are provided by residues 81 to 85 (DCPGH) and 136 to 139 (NKCD). Residues 136-139 (NKCD) are G4. Residues 174–176 (SAL) are G5.

Belongs to the TRAFAC class translation factor GTPase superfamily. Classic translation factor GTPase family. EF-Tu/EF-1A subfamily. Monomer.

The protein localises to the cytoplasm. The enzyme catalyses GTP + H2O = GDP + phosphate + H(+). In terms of biological role, GTP hydrolase that promotes the GTP-dependent binding of aminoacyl-tRNA to the A-site of ribosomes during protein biosynthesis. This is Elongation factor Tu from Cronobacter sakazakii (strain ATCC BAA-894) (Enterobacter sakazakii).